Consider the following 479-residue polypeptide: 5-hydroxytryptamine receptor 7 (479 aa).

Residues M1–V83 lie on the Extracellular side of the membrane. N-linked (GlcNAc...) asparagine glycans are attached at residues N5 and N66. Residues I84–F108 traverse the membrane as a helical segment. Over V109–Y118 the chain is Cytoplasmic. Residues L119–V140 traverse the membrane as a helical segment. Residues T141–H152 lie on the Extracellular side of the membrane. Residues F153 to I178 traverse the membrane as a helical segment. Cysteines 155 and 231 form a disulfide. Position 162 (D162) interacts with serotonin. Residues D179–C198 lie on the Cytoplasmic side of the membrane. Residues M199–F219 traverse the membrane as a helical segment. The Extracellular portion of the chain corresponds to G220–F237. The helical transmembrane segment at G238–Y260 threads the bilayer. Topologically, residues Q261–A326 are cytoplasmic. The helical transmembrane segment at T327–F352 threads the bilayer. At I353–L363 the chain is on the extracellular side. A helical membrane pass occupies residues W364 to F387. Residues N388 to D479 lie on the Cytoplasmic side of the membrane. The S-palmitoyl cysteine moiety is linked to residue C401.

It belongs to the G-protein coupled receptor 1 family. Predominant isoform in spleen, caudate and hippocampus. In terms of tissue distribution, expressed at lower levels. As to expression, minor isoform in terms of expression.

The protein resides in the cell membrane. G-protein coupled receptor for 5-hydroxytryptamine (serotonin), a biogenic hormone that functions as a neurotransmitter, a hormone and a mitogen. Ligand binding causes a conformation change that triggers signaling via guanine nucleotide-binding proteins (G proteins) and modulates the activity of downstream effectors. HTR7 is coupled to G(s) G alpha proteins and mediates activation of adenylate cyclase activity. The protein is 5-hydroxytryptamine receptor 7 of Homo sapiens (Human).